The chain runs to 410 residues: Transcription factor PHYTOCHROME INTERACTING FACTOR-LIKE 13 (410 aa).

Positions 82–92 (AAAAAGPSSHH) are enriched in low complexity. 2 disordered regions span residues 82 to 110 (AAAA…MRSG) and 137 to 225 (CRDA…AEVH). Pro residues predominate over residues 93 to 104 (APPPDLPPPAAR). The span at 187–197 (GREDSDSRSED) shows a compositional bias: basic and acidic residues. The segment covering 209–219 (SSRRYGSKRRT) has biased composition (basic residues). Positions 220-233 (RAAEVHNLSERRRR) are basic motif. The bHLH domain maps to 220–269 (RAAEVHNLSERRRRDRINEKMRALQELIPHCNKTDKASILDEAIEYLKSL). The segment at 234-269 (DRINEKMRALQELIPHCNKTDKASILDEAIEYLKSL) is helix-loop-helix motif. The segment at 357–410 (PFLHPDGWQTVPPQVSGPYASGPQVAQQNQIPKASASTVLPNSGAEQPPTSDGI) is disordered. Over residues 380–410 (QVAQQNQIPKASASTVLPNSGAEQPPTSDGI) the composition is skewed to polar residues.

It belongs to the bHLH protein family. Interacts with PRR1. Interacts with LF. Highly expressed in the node portions of the stem. Expressed in the leaves and the basal part of shoots.

The protein localises to the nucleus. Its function is as follows. Transcription factor that may act as negative regulator of phyB-dependent light signal transduction. Transcription activator that acts as a positive regulator of internode elongation. May function via regulation of cell wall-related genes. May play a role in a drought-associated growth-restriction mechanism in response to drought stress. The protein is Transcription factor PHYTOCHROME INTERACTING FACTOR-LIKE 13 of Oryza sativa subsp. japonica (Rice).